The chain runs to 218 residues: 3-dehydroquinate dehydratase (218 aa).

3-dehydroquinate is bound by residues 29-31 (EFR) and Arg56. His116 serves as the catalytic Proton donor/acceptor. Catalysis depends on Lys142, which acts as the Schiff-base intermediate with substrate. The 3-dehydroquinate site is built by Arg180, Ser200, and Gln204.

Belongs to the type-I 3-dehydroquinase family. As to quaternary structure, homodimer.

It carries out the reaction 3-dehydroquinate = 3-dehydroshikimate + H2O. It functions in the pathway metabolic intermediate biosynthesis; chorismate biosynthesis; chorismate from D-erythrose 4-phosphate and phosphoenolpyruvate: step 3/7. Involved in the third step of the chorismate pathway, which leads to the biosynthesis of aromatic amino acids. Catalyzes the cis-dehydration of 3-dehydroquinate (DHQ) and introduces the first double bond of the aromatic ring to yield 3-dehydroshikimate. The chain is 3-dehydroquinate dehydratase from Methanococcus maripaludis (strain C5 / ATCC BAA-1333).